The sequence spans 345 residues: NADPH dehydrogenase (345 aa).

Residue 23–26 (SPMC) participates in FMN binding. Y28 serves as a coordination point for substrate. A60 and Q102 together coordinate FMN. 164–167 (HGAH) serves as a coordination point for substrate. Residues R215 and 307–308 (GR) contribute to the FMN site.

The protein belongs to the NADH:flavin oxidoreductase/NADH oxidase family. NamA subfamily. In terms of assembly, homotetramer. It depends on FMN as a cofactor.

It carries out the reaction A + NADPH + H(+) = AH2 + NADP(+). Functionally, catalyzes the reduction of the double bond of an array of alpha,beta-unsaturated aldehydes and ketones. It also reduces the nitro group of nitroester and nitroaromatic compounds. It could have a role in detoxification processes. The protein is NADPH dehydrogenase of Bacillus cereus (strain G9842).